Consider the following 346-residue polypeptide: uncharacterized protein (346 aa).

It belongs to the MG067/MG068/MG395 family.

This is an uncharacterized protein from Mycoplasma pneumoniae (strain ATCC 29342 / M129 / Subtype 1) (Mycoplasmoides pneumoniae).